The sequence spans 224 residues: MNGNKLVFLPKKSYHQLFNITFSAMMLALAIITSLISEFISIPFFSQLKLTFDISVVFLVACAFFVSLGWSLTITLASALTSFFWNTNNVIGVLTVTLANLSTILFTRLYFCLFSKRRFCWIFVFLFTTLSNALLLTTLNGILITPLFWYYFGYVQTPNFLIVAEQYNKNTDFHFFFFGINNYWLGIFCLYSFFNLVKFGLVSCFGVPIMRSFQKFYWKRALAK.

6 helical membrane-spanning segments follow: residues 25–45 (MMLALAIITSLISEFISIPFF), 54–74 (ISVVFLVACAFFVSLGWSLTI), 91–111 (IGVLTVTLANLSTILFTRLYF), 119–139 (FCWIFVFLFTTLSNALLLTTL), 142–162 (ILITPLFWYYFGYVQTPNFLI), and 174–194 (HFFFFGINNYWLGIFCLYSFF).

Its subcellular location is the cell membrane. This is an uncharacterized protein from Mycoplasma genitalium (strain ATCC 33530 / DSM 19775 / NCTC 10195 / G37) (Mycoplasmoides genitalium).